The primary structure comprises 146 residues: Hemoglobin subunit beta (146 aa).

An N-acetylvaline modification is found at Val1. Positions 2–146 constitute a Globin domain; sequence HLTADEKAAV…VATALAHKYH (145 aa). Phosphothreonine is present on Thr12. The residue at position 44 (Ser44) is a Phosphoserine. Lys59 bears the N6-acetyllysine mark. Heme b is bound at residue His63. Position 82 is an N6-acetyllysine (Lys82). Heme b is bound at residue His92. An S-nitrosocysteine modification is found at Cys93. At Lys144 the chain carries N6-acetyllysine.

Belongs to the globin family. In terms of assembly, heterotetramer of two alpha chains and two beta chains. In terms of tissue distribution, red blood cells.

Functionally, involved in oxygen transport from the lung to the various peripheral tissues. This chain is Hemoglobin subunit beta (HBB), found in Taphozous georgianus (Sharp-nosed tomb bat).